A 141-amino-acid polypeptide reads, in one-letter code: Large ribosomal subunit protein uL22 (141 aa).

The tract at residues E110–S141 is disordered. Residues K117 to K134 show a composition bias toward low complexity.

This sequence belongs to the universal ribosomal protein uL22 family. As to quaternary structure, part of the 50S ribosomal subunit.

Its function is as follows. This protein binds specifically to 23S rRNA; its binding is stimulated by other ribosomal proteins, e.g. L4, L17, and L20. It is important during the early stages of 50S assembly. It makes multiple contacts with different domains of the 23S rRNA in the assembled 50S subunit and ribosome. The globular domain of the protein is located near the polypeptide exit tunnel on the outside of the subunit, while an extended beta-hairpin is found that lines the wall of the exit tunnel in the center of the 70S ribosome. The sequence is that of Large ribosomal subunit protein uL22 from Campylobacter jejuni (strain RM1221).